A 542-amino-acid polypeptide reads, in one-letter code: Prolyl 3-hydroxylase OGFOD1 (542 aa).

A Fe2OG dioxygenase domain is found at 134–239 (DLESTIDMSC…RLSISGWFHG (106 aa)). Fe cation-binding residues include His155 and Asp157. Tyr169 serves as a coordination point for 2-oxoglutarate. Residue His218 coordinates Fe cation. Arg230 provides a ligand contact to 2-oxoglutarate. Positions 371-435 (SEDEPEDKKE…AKKESSVPTC (65 aa)) are disordered. A compositionally biased stretch (polar residues) spans 395 to 417 (SHSSSEPENSWAATSDSSLQSEG).

The protein belongs to the TPA1 family. Monomer. Requires Fe(2+) as cofactor. L-ascorbate serves as cofactor.

Its subcellular location is the cytoplasm. The protein localises to the nucleus. It carries out the reaction [ribosomal protein uS12]-L-proline + 2-oxoglutarate + O2 = [ribosomal protein uS12]-(3S)-3-hydroxy-L-proline + succinate + CO2. Functionally, prolyl 3-hydroxylase that catalyzes 3-hydroxylation of 'Pro-62' of small ribosomal subunit uS12 (RPS23), thereby regulating protein translation termination efficiency. Involved in stress granule formation. This is Prolyl 3-hydroxylase OGFOD1 (OGFOD1) from Bos taurus (Bovine).